A 79-amino-acid chain; its full sequence is Cytochrome b-c1 complex subunit 10 (79 aa).

Topologically, residues 1-23 (MISFFPNKPMYHVQPHISFITPE) are mitochondrial matrix. The chain crosses the membrane as a helical span at residues 24 to 47 (RTMKTIPAFSRWAFAAVAGVFVFA). Residues 48–79 (MQVPKVKTTILQPIAFIGDHFKDKTPEEDKWL) lie on the Mitochondrial intermembrane side of the membrane.

The protein belongs to the UQCR11/QCR10 family. Component of the ubiquinol-cytochrome c oxidoreductase (cytochrome b-c1 complex, complex III, CIII), a multisubunit enzyme composed of 3 respiratory subunits cytochrome b, cytochrome c1 and Rieske protein, 2 core protein subunits, and additional low-molecular weight protein subunits. The complex exists as an obligatory dimer and forms supercomplexes (SCs) in the inner mitochondrial membrane with cytochrome c oxidase (complex IV, CIV).

The protein localises to the mitochondrion inner membrane. Its function is as follows. Component of the ubiquinol-cytochrome c oxidoreductase, a multisubunit transmembrane complex that is part of the mitochondrial electron transport chain which drives oxidative phosphorylation. The respiratory chain contains 3 multisubunit complexes succinate dehydrogenase (complex II, CII), ubiquinol-cytochrome c oxidoreductase (cytochrome b-c1 complex, complex III, CIII) and cytochrome c oxidase (complex IV, CIV), that cooperate to transfer electrons derived from NADH and succinate to molecular oxygen, creating an electrochemical gradient over the inner membrane that drives transmembrane transport and the ATP synthase. The cytochrome b-c1 complex catalyzes electron transfer from ubiquinol to cytochrome c, linking this redox reaction to translocation of protons across the mitochondrial inner membrane, with protons being carried across the membrane as hydrogens on the quinol. In the process called Q cycle, 2 protons are consumed from the matrix, 4 protons are released into the intermembrane space and 2 electrons are passed to cytochrome c. QCR10 has a role in CIII assembly and RIP1 stability. The chain is Cytochrome b-c1 complex subunit 10 from Schizosaccharomyces pombe (strain 972 / ATCC 24843) (Fission yeast).